A 321-amino-acid chain; its full sequence is MESNGVPMITLSSGIRMPALGMGTAETMVKGTEREKLAFLKAIEVGYRHFDTAAAYQSEECLGEAIAEALQLGLIKSRDELFITSKLWCADAHADLVLPALQNSLRNLKLDYLDLYLIHHPVSLKPGKFVNEIPKDHILPMDYKSVWAAMEECQTLGFTRAIGVCNFSCKRLQELMETANSPPVVNQVEMSPTLHQKNLREYCKANNIMITAHSVLGAVGAAWGTNAVMHSKVLHQIAVARGKSVAQVSMRWVYQQGASLVVKSFNEARMKENLKIFDWELTAEDMEKISEIPQSRTSSAAFLLSPTGPFKTEEEFWDEKD.

NADPH contacts are provided by threonine 27 and aspartate 51. Catalysis depends on proton donor residues tyrosine 56 and histidine 119. Histidine 119 contributes to the substrate binding site. NADPH-binding residues include glutamine 187, serine 214, leucine 216, serine 264, and arginine 269.

This sequence belongs to the aldo/keto reductase family. In terms of tissue distribution, latex secreting cells (laticifer cells). Expressed constitutively and ubiquitously with highest levels in capsules. Restricted to the parietal region of sieve elements adjacent or proximal to laticifers in roots, stems, leaves and carpels.

The protein resides in the cytoplasm. The protein localises to the cytosol. The enzyme catalyses codeine + NADP(+) = codeinone + NADPH + H(+). It catalyses the reaction neopine + NADP(+) = neopinone + NADPH + H(+). The catalysed reaction is morphine + NADP(+) = morphinone + NADPH + H(+). It carries out the reaction neomorphine + NADP(+) = neomorphinone + NADPH + H(+). Its pathway is alkaloid biosynthesis; morphine biosynthesis. Its function is as follows. NADPH-dependent reductase involved in biosynthesis of morphinan-type benzylisoquinoline and opiate alkaloids natural products. Reduces codeinone to codeine in the penultimate step in morphine biosynthesis. Can use morphinone, hydrocodone and hydromorphone as substrate during reductive reaction with NADPH as cofactor, and morphine and dihydrocodeine as substrate during oxidative reaction with NADP as cofactor. Converts morphinone to morphine, and neomorphinone to neomorphine. Reduces irreversibly neopinone, a spontaneous isomer of codeinone, to neopine; in planta, neopine levels are limited to low levels. This is NADPH-dependent codeinone reductase 1-1 from Papaver somniferum (Opium poppy).